A 426-amino-acid chain; its full sequence is Mitogen-activated protein kinase 8 (426 aa).

The region spanning 26–321 (YQNLKPIGSG…VDDALQHPYI (296 aa)) is the Protein kinase domain. ATP contacts are provided by residues 33-38 (GSGAQG) and lysine 55. Aspartate 151 (proton acceptor) is an active-site residue. The residue at position 183 (threonine 183) is a Phosphothreonine. The TXY motif lies at 183–185 (TPY). Tyrosine 185 is modified (phosphotyrosine). Residues 375 to 426 (QPAPLGAAVTDGSQAHTSSSSGDASSMSTDPTLPSDTDSSLETSAGTLGCCR) are disordered. Low complexity predominate over residues 384–404 (TDGSQAHTSSSSGDASSMSTD). Residues 405–420 (PTLPSDTDSSLETSAG) are compositionally biased toward polar residues.

It belongs to the protein kinase superfamily. CMGC Ser/Thr protein kinase family. MAP kinase subfamily. The cofactor is Mg(2+). Post-translationally, dually phosphorylated on Thr-183 and Tyr-185, which activates the enzyme. In terms of tissue distribution, strongly expressed in presumptive ectoderm and mesoderm regions and weakly expressed in endoderm regions during early stages of embryo development. Expressed in the head and dorsal regions during neurula and tailbud stages.

It is found in the cytoplasm. The protein resides in the nucleus. Its subcellular location is the synapse. The catalysed reaction is L-seryl-[protein] + ATP = O-phospho-L-seryl-[protein] + ADP + H(+). It carries out the reaction L-threonyl-[protein] + ATP = O-phospho-L-threonyl-[protein] + ADP + H(+). Activated by threonine and tyrosine phosphorylation, potentially by the dual-specificity kinase, MKK7. Indirectly activated by Wnt5a. Its function is as follows. Responds to activation by environmental stress and pro-inflammatory cytokines by phosphorylating a number of transcription factors, and thus regulating transcriptional activity. Regulates morphogenic cell movements, controlling convergent extension during gastrulation. May play a role in the regulation of the circadian clock. The sequence is that of Mitogen-activated protein kinase 8 (mapk8) from Xenopus laevis (African clawed frog).